We begin with the raw amino-acid sequence, 74 residues long: MVAAAKILGAGLATIGLAGAGVGVGLVFAALINSTSRNPSLRPQLFSYTILGFALTEAIGLFALMMAFLLLYAA.

The next 2 membrane-spanning stretches (helical) occupy residues 12-32 and 50-70; these read LATI…AALI and ILGF…AFLL.

Belongs to the ATPase C chain family. F-type ATPases have 2 components, CF(1) - the catalytic core - and CF(0) - the membrane proton channel. CF(1) has five subunits: alpha(3), beta(3), gamma(1), delta(1), epsilon(1). CF(0) has three main subunits: a, b and c.

The protein resides in the mitochondrion membrane. Mitochondrial membrane ATP synthase (F(1)F(0) ATP synthase or Complex V) produces ATP from ADP in the presence of a proton gradient across the membrane which is generated by electron transport complexes of the respiratory chain. F-type ATPases consist of two structural domains, F(1) - containing the extramembraneous catalytic core and F(0) - containing the membrane proton channel, linked together by a central stalk and a peripheral stalk. During catalysis, ATP synthesis in the catalytic domain of F(1) is coupled via a rotary mechanism of the central stalk subunits to proton translocation. Part of the complex F(0) domain. A homomeric c-ring of probably 10 subunits is part of the complex rotary element. This is ATP synthase subunit 9, mitochondrial from Rhizopus oryzae (Mucormycosis agent).